We begin with the raw amino-acid sequence, 125 residues long: Ribonuclease P protein component (125 aa).

It belongs to the RnpA family. In terms of assembly, consists of a catalytic RNA component (M1 or rnpB) and a protein subunit.

The enzyme catalyses Endonucleolytic cleavage of RNA, removing 5'-extranucleotides from tRNA precursor.. Functionally, RNaseP catalyzes the removal of the 5'-leader sequence from pre-tRNA to produce the mature 5'-terminus. It can also cleave other RNA substrates such as 4.5S RNA. The protein component plays an auxiliary but essential role in vivo by binding to the 5'-leader sequence and broadening the substrate specificity of the ribozyme. In Clostridium botulinum (strain Alaska E43 / Type E3), this protein is Ribonuclease P protein component.